A 163-amino-acid polypeptide reads, in one-letter code: Nucleotide-binding protein Dvul_1191 (163 aa).

The protein belongs to the YajQ family.

Functionally, nucleotide-binding protein. The protein is Nucleotide-binding protein Dvul_1191 of Nitratidesulfovibrio vulgaris (strain DP4) (Desulfovibrio vulgaris).